The primary structure comprises 340 residues: S-adenosylmethionine:tRNA ribosyltransferase-isomerase (340 aa).

It belongs to the QueA family. In terms of assembly, monomer.

The protein localises to the cytoplasm. The enzyme catalyses 7-aminomethyl-7-carbaguanosine(34) in tRNA + S-adenosyl-L-methionine = epoxyqueuosine(34) in tRNA + adenine + L-methionine + 2 H(+). It participates in tRNA modification; tRNA-queuosine biosynthesis. Its function is as follows. Transfers and isomerizes the ribose moiety from AdoMet to the 7-aminomethyl group of 7-deazaguanine (preQ1-tRNA) to give epoxyqueuosine (oQ-tRNA). This is S-adenosylmethionine:tRNA ribosyltransferase-isomerase from Aliarcobacter butzleri (strain RM4018) (Arcobacter butzleri).